Consider the following 59-residue polypeptide: Prokaryotic ubiquitin-like protein UBact (59 aa).

Residues 1–59 (MEMTDPLRREEKKESSPDPKEESGPSRPDVSRPGRDSLLKRMKKVDPKQSEKYKQRTGQ) form a disordered region. Deamidated glutamine is present on Gln-59. Residue Gln-59 forms an Isoglutamyl lysine isopeptide (Gln-Lys) (interchain with K-? in acceptor proteins) linkage.

This sequence belongs to the ubiquitin-like protein UBact family. May be modified by deamidation of its C-terminal glutamine to glutamate by the adjacently encoded deamidase. This could be a prerequisite to the subsequent conjugation, as shown in the other prokaryotic ubiquitin-like protein Pup.

Functionally, may function as a protein modifier covalently attached to lysine residues of substrate proteins. This may serve to target the modified proteins for degradation by proteasomes. The polypeptide is Prokaryotic ubiquitin-like protein UBact (Nitrospina gracilis (strain 3/211)).